The sequence spans 130 residues: uncharacterized protein (130 aa).

The signal sequence occupies residues 1–23 (MINRKVVYALSALLLFVYSYAFI).

This is an uncharacterized protein from Aquifex aeolicus (strain VF5).